The primary structure comprises 396 residues: Acetylornithine aminotransferase 2 (396 aa).

Pyridoxal 5'-phosphate is bound by residues 102–103 and phenylalanine 134; that span reads GA. Arginine 137 is a N(2)-acetyl-L-ornithine binding site. 219-222 is a binding site for pyridoxal 5'-phosphate; that stretch reads DEVQ. The residue at position 248 (lysine 248) is an N6-(pyridoxal phosphate)lysine. Threonine 276 contacts pyridoxal 5'-phosphate.

This sequence belongs to the class-III pyridoxal-phosphate-dependent aminotransferase family. ArgD subfamily. As to quaternary structure, homodimer. Requires pyridoxal 5'-phosphate as cofactor.

The protein resides in the cytoplasm. It carries out the reaction N(2)-acetyl-L-ornithine + 2-oxoglutarate = N-acetyl-L-glutamate 5-semialdehyde + L-glutamate. It participates in amino-acid biosynthesis; L-arginine biosynthesis; N(2)-acetyl-L-ornithine from L-glutamate: step 4/4. In Bordetella parapertussis (strain 12822 / ATCC BAA-587 / NCTC 13253), this protein is Acetylornithine aminotransferase 2.